The chain runs to 321 residues: MKFGIEFVPNEPIEKIVKLVKLAEDVGFEYAWITDHYNNKNVYETLALIAEGTETIKLGPGVTNPYVRSPAITASAIATLDELSNGRATLGIGPGDKATFDALGIEWVKPVSTIRDAIAMMRTLLAGEKTESGAQLMGVKAVQEKIPIYMGAQGPMMLKTAGEISDGALINASNPKDFEAAVPLIKEGAEAAGKSIADIDVAAYTCCSIDEDAAAAANAAKIVVAFIAAGSPPPVFERHGLPADTGKKFGELLGKGDFGGAIGAVDDALMEAFSVVGTPDEFIPKIEALGEMGVTQYVAGSPIGPDKEKSIKLLGEVIASF.

The protein belongs to the mer family. As to quaternary structure, homotetramer.

Its subcellular location is the cytoplasm. The catalysed reaction is 5-methyl-5,6,7,8-tetrahydromethanopterin + oxidized coenzyme F420-(gamma-L-Glu)(n) + H(+) = 5,10-methylenetetrahydromethanopterin + reduced coenzyme F420-(gamma-L-Glu)(n). It functions in the pathway one-carbon metabolism; methanogenesis from CO(2); methyl-coenzyme M from 5,10-methylene-5,6,7,8-tetrahydromethanopterin: step 1/2. Functionally, catalyzes the reversible reduction of methylene-H(4)MPT to methyl-H(4)MPT. This Methanothermobacter marburgensis (strain ATCC BAA-927 / DSM 2133 / JCM 14651 / NBRC 100331 / OCM 82 / Marburg) (Methanobacterium thermoautotrophicum) protein is 5,10-methylenetetrahydromethanopterin reductase.